Consider the following 975-residue polypeptide: Kinesin-like protein KIN-14K (975 aa).

The segment at 1–40 is disordered; sequence MKNRIKKGSSMIGVYGRSDGSSSIQSSNGSESRESIDDNK. Positions 17-30 are enriched in low complexity; the sequence is RSDGSSSIQSSNGS. Positions 31–40 are enriched in basic and acidic residues; that stretch reads ESRESIDDNK. In terms of domain architecture, Calponin-homology (CH) spans 40–143; it reads KQGHQSLVEW…SLKALKASFS (104 aa). Positions 289 to 345 form a coiled coil; sequence KERSNAELSKLKQELEIVKETHEKQFLELKLNAQKAKVELERQVKNSELRVVEAKEL. The 311-residue stretch at 436 to 746 folds into the Kinesin motor domain; sequence NIRVYCRIRP…LKFAERVSGV (311 aa). 520 to 527 lines the ATP pocket; it reads GQTGSGKT. Residues 757-788 are a coiled coil; that stretch reads GRDVRQLMEQVSNLKDMIAKKDEELQKFQNIN. Disordered stretches follow at residues 801–852 and 900–975; these read VSPP…GAKD and LFPE…NRKR. The span at 944-958 shows a compositional bias: low complexity; that stretch reads LSISTTSSKALTSSK.

It belongs to the TRAFAC class myosin-kinesin ATPase superfamily. Kinesin family. KIN-14 subfamily.

In Arabidopsis thaliana (Mouse-ear cress), this protein is Kinesin-like protein KIN-14K.